We begin with the raw amino-acid sequence, 417 residues long: Serine hydroxymethyltransferase (417 aa).

Residues L121 and 125 to 127 each bind (6S)-5,6,7,8-tetrahydrofolate; that span reads GHL. Residue K229 is modified to N6-(pyridoxal phosphate)lysine. Residue 355–357 coordinates (6S)-5,6,7,8-tetrahydrofolate; that stretch reads SPF.

Belongs to the SHMT family. Homodimer. The cofactor is pyridoxal 5'-phosphate.

It localises to the cytoplasm. The enzyme catalyses (6R)-5,10-methylene-5,6,7,8-tetrahydrofolate + glycine + H2O = (6S)-5,6,7,8-tetrahydrofolate + L-serine. It participates in one-carbon metabolism; tetrahydrofolate interconversion. Its pathway is amino-acid biosynthesis; glycine biosynthesis; glycine from L-serine: step 1/1. In terms of biological role, catalyzes the reversible interconversion of serine and glycine with tetrahydrofolate (THF) serving as the one-carbon carrier. This reaction serves as the major source of one-carbon groups required for the biosynthesis of purines, thymidylate, methionine, and other important biomolecules. Also exhibits THF-independent aldolase activity toward beta-hydroxyamino acids, producing glycine and aldehydes, via a retro-aldol mechanism. The protein is Serine hydroxymethyltransferase of Xylella fastidiosa (strain M12).